Reading from the N-terminus, the 116-residue chain is Staphylococcal complement inhibitor (116 aa).

Positions 1-31 (MKIRKSILAGTLAIVLASPLVTNLDKNEAQA) are cleaved as a signal peptide. The segment at 62–79 (LATGSLNTYYKRTIKISG) is essential for activity.

Belongs to the SCIN family.

It is found in the secreted. Its function is as follows. Involved in countering the first line of host defense mechanisms. Efficiently inhibits opsonization, phagocytosis and killing of S.aureus by human neutrophils. Acts by binding and stabilizing human C3 convertases (C4b2a and C3bBb), leading to their inactivation. The convertases are no longer able to cleave complement C3, therefore preventing further C3b deposition on the bacterial surface and phagocytosis of the bacterium. Also prevents C5a-induced neutrophil responses. This is Staphylococcal complement inhibitor (scn) from Staphylococcus aureus (strain Mu50 / ATCC 700699).